We begin with the raw amino-acid sequence, 326 residues long: Beta-ketoacyl-[acyl-carrier-protein] synthase III (326 aa).

Catalysis depends on residues C111 and H252. The segment at Q253–R257 is ACP-binding. N282 is an active-site residue.

The protein belongs to the thiolase-like superfamily. FabH family. As to quaternary structure, homodimer.

It is found in the plastid. It localises to the chloroplast. The enzyme catalyses malonyl-[ACP] + acetyl-CoA + H(+) = 3-oxobutanoyl-[ACP] + CO2 + CoA. Its pathway is lipid metabolism; fatty acid biosynthesis. In terms of biological role, catalyzes the condensation reaction of fatty acid synthesis by the addition to an acyl acceptor of two carbons from malonyl-ACP. Catalyzes the first condensation reaction which initiates fatty acid synthesis and may therefore play a role in governing the total rate of fatty acid production. Possesses both acetoacetyl-ACP synthase and acetyl transacylase activities. Its substrate specificity determines the biosynthesis of branched-chain and/or straight-chain of fatty acids. This chain is Beta-ketoacyl-[acyl-carrier-protein] synthase III, found in Porphyra purpurea (Red seaweed).